A 1025-amino-acid polypeptide reads, in one-letter code: Beta-galactosidase (1025 aa).

Residues Asn-103 and Asp-202 each coordinate substrate. Asp-202 contributes to the Na(+) binding site. Residues Glu-417, His-419, and Glu-462 each contribute to the Mg(2+) site. Substrate contacts are provided by residues Glu-462 and 538-541 (EYAH). Catalysis depends on Glu-462, which acts as the Proton donor. Residue Glu-538 is the Nucleophile of the active site. Asn-598 is a binding site for Mg(2+). Phe-602 and Asn-605 together coordinate Na(+). The substrate site is built by Asn-605 and Trp-1003.

It belongs to the glycosyl hydrolase 2 family. As to quaternary structure, homotetramer. Mg(2+) is required as a cofactor. The cofactor is Na(+).

It catalyses the reaction Hydrolysis of terminal non-reducing beta-D-galactose residues in beta-D-galactosides.. This Citrobacter koseri (strain ATCC BAA-895 / CDC 4225-83 / SGSC4696) protein is Beta-galactosidase.